The following is a 267-amino-acid chain: Sulfur carrier protein FdhD (267 aa).

Catalysis depends on Cys-108, which acts as the Cysteine persulfide intermediate.

This sequence belongs to the FdhD family.

Its subcellular location is the cytoplasm. Functionally, required for formate dehydrogenase (FDH) activity. Acts as a sulfur carrier protein that transfers sulfur from IscS to the molybdenum cofactor prior to its insertion into FDH. This chain is Sulfur carrier protein FdhD, found in Shouchella clausii (strain KSM-K16) (Alkalihalobacillus clausii).